A 297-amino-acid polypeptide reads, in one-letter code: tRNA dimethylallyltransferase (297 aa).

10–17 (GITASGKS) provides a ligand contact to ATP. Residue 12-17 (TASGKS) coordinates substrate. The tract at residues 36–39 (DSKQ) is interaction with substrate tRNA.

Belongs to the IPP transferase family. In terms of assembly, monomer. The cofactor is Mg(2+).

The enzyme catalyses adenosine(37) in tRNA + dimethylallyl diphosphate = N(6)-dimethylallyladenosine(37) in tRNA + diphosphate. Its function is as follows. Catalyzes the transfer of a dimethylallyl group onto the adenine at position 37 in tRNAs that read codons beginning with uridine, leading to the formation of N6-(dimethylallyl)adenosine (i(6)A). In Wolbachia sp. subsp. Brugia malayi (strain TRS), this protein is tRNA dimethylallyltransferase.